The sequence spans 724 residues: Probable serine/threonine-protein kinase KKQ8 (724 aa).

Disordered regions lie at residues 1-81 (MVMQ…RQRS) and 93-188 (HPFR…KDIL). Position 19 is a phosphoserine (S19). The segment covering 45-54 (PYRSSSTSPK) has biased composition (low complexity). A compositionally biased stretch (polar residues) spans 95–106 (FRQTGSGASNSP). The segment covering 143–162 (RSSSVSSCDSSNGTTSSSDS) has biased composition (low complexity). Phosphoserine occurs at positions 232, 238, and 241. Composition is skewed to polar residues over residues 318-329 (NASSLLPNVEKS) and 338-351 (GQSPNDSNRSSPTQ). The tract at residues 318 to 355 (NASSLLPNVEKSQTNHEKRTGQSPNDSNRSSPTQGRED) is disordered. The region spanning 412-712 (GHPVGLVGAG…VGKLLDMQWM (301 aa)) is the Protein kinase domain. ATP contacts are provided by residues 418 to 426 (VGAGAYGEV) and K455. The active-site Proton acceptor is the D563.

It belongs to the protein kinase superfamily. CAMK Ser/Thr protein kinase family. NPR/HAL subfamily. HAL5 sub-subfamily.

It is found in the cytoplasm. The catalysed reaction is L-seryl-[protein] + ATP = O-phospho-L-seryl-[protein] + ADP + H(+). It carries out the reaction L-threonyl-[protein] + ATP = O-phospho-L-threonyl-[protein] + ADP + H(+). The sequence is that of Probable serine/threonine-protein kinase KKQ8 (KKQ8) from Saccharomyces cerevisiae (strain YJM789) (Baker's yeast).